We begin with the raw amino-acid sequence, 475 residues long: Ankyrin repeat, SAM and basic leucine zipper domain-containing protein 1 (475 aa).

Residues 1–38 (MATGSLRGLAVAGGGESSDSEDDGWEIGYLDRPPQKLK) are disordered. A phosphoserine mark is found at Ser-17, Ser-18, and Ser-20. 6 ANK repeats span residues 45-74 (EKNETFKKALTTGDTSLVKELLDSGISVDS), 78-107 (YGWTPLMYAASVANVELVRVLLDRGANASF), 110-144 (DKQTILITACSARGSEEQILKCVELLLSRNADPNV), 148-177 (RLMTPIMYAARDGHPQVVALLVAHGAEVNI), 181-210 (NGYTALTWAARQGHKSVVLKLLELGANKTL), and 214-243 (DGKTPSEIAKRNKHLEIFNLLSLTLNPLEG). One can recognise an SAM domain in the interval 272–334 (SYTAFGDLEI…KILAALKELE (63 aa)).

As to quaternary structure, interacts with DDX4, PIWIL1, RANBP9 and TDRD1.

It is found in the cytoplasm. Functionally, plays a central role during spermatogenesis by repressing transposable elements and preventing their mobilization, which is essential for the germline integrity. Acts via the piRNA metabolic process, which mediates the repression of transposable elements during meiosis by forming complexes composed of piRNAs and Piwi proteins and governs the methylation and subsequent repression of transposons. Its association with pi-bodies suggests a participation in the primary piRNAs metabolic process. Required prior to the pachytene stage to facilitate the production of multiple types of piRNAs, including those associated with repeats involved in the regulation of retrotransposons. May act by mediating protein-protein interactions during germ cell maturation. This chain is Ankyrin repeat, SAM and basic leucine zipper domain-containing protein 1 (ASZ1), found in Oryctolagus cuniculus (Rabbit).